We begin with the raw amino-acid sequence, 653 residues long: Endoglin (653 aa).

A signal peptide spans 1–26 (MDRGVLPLPITLLFVIYSFVPTTGLA). Residues 27-47 (ERVGCDLQPVDPTRGEVTFTT) form an OR1, N-terminal part region. Positions 27–337 (ERVGCDLQPV…SSCGGVFQTT (311 aa)) are required for interaction with GDF2. The Extracellular portion of the chain corresponds to 27 to 581 (ERVGCDLQPV…IVSPDLSGKG (555 aa)). 7 disulfide bridges follow: Cys-31/Cys-209, Cys-54/Cys-184, Cys-244/Cys-330, Cys-350/Cys-382, Cys-363/Cys-442, Cys-394/Cys-412, and Cys-493/Cys-549. Residues 48-201 (SQVSEGCVAQ…MGATLEWQPR (154 aa)) are OR2. N-linked (GlcNAc...) asparagine glycans are attached at residues Asn-89, Asn-135, and Asn-266. The OR1, C-terminal part stretch occupies residues 202–330 (AQTPVQSCRL…SNVSLRASSC (129 aa)). Positions 270–282 (QILTTGEYSVKIF) are essential for interaction with GDF2. N-linked (GlcNAc...) asparagine glycans are attached at residues Asn-307 and Asn-322. A ZP domain is found at 363–510 (CGNQVMTLAL…GDMVELIQSR (148 aa)). A helical membrane pass occupies residues 582–606 (LVLPSVLGITFGAFLIGALLTAALW). The Cytoplasmic portion of the chain corresponds to 607 to 653 (YIYSHTRGPSKREPVVAVAAPASSESSSTNHSIGSTQSTPCSTSSMA). The segment covering 624–634 (VAAPASSESSS) has biased composition (low complexity). Residues 624–653 (VAAPASSESSSTNHSIGSTQSTPCSTSSMA) are disordered. The segment covering 635-653 (TNHSIGSTQSTPCSTSSMA) has biased composition (polar residues). Ser-641 and Ser-644 each carry phosphoserine; by TGFBR1.

Homodimer; disulfide-linked. Forms a heteromeric complex with the signaling receptors for transforming growth factor-beta: TGFBR1 and/or TGFBR2. Interacts with TGFB1. It is able to bind TGFB1 and TGFB2 with high affinity, but not TGFB3. Interacts with GDF2, forming a heterotetramer with a 2:2 stoichiometry. Interacts with ACVRL1. Can form a heteromeric complex with GDF2 and ACVRL1. Interacts with BMP10. Interacts with DYNLT4. Interacts with ARRB2. As to expression, detected on blood vessels (at protein level). Detected on adult pulmonary artery, capillaries supporting the heart muscle and lung alveolar capillary endothelial cells. Endoglin is restricted to endothelial cells in all tissues except bone marrow and is also found in stromal cells within the connective tissue of intestine, stomach, heart, skeletal muscle, uterus, ovary, oviduct, testis and thymus.

Its subcellular location is the cell membrane. In terms of biological role, vascular endothelium glycoprotein that plays an important role in the regulation of angiogenesis. Required for normal structure and integrity of adult vasculature. Regulates the migration of vascular endothelial cells. Required for normal extraembryonic angiogenesis and for embryonic heart development. May regulate endothelial cell shape changes in response to blood flow, which drive vascular remodeling and establishment of normal vascular morphology during angiogenesis. May play a role in the binding of endothelial cells to integrins. Acts as a TGF-beta coreceptor and is involved in the TGF-beta/BMP signaling cascade that ultimately leads to the activation of SMAD transcription factors. Required for GDF2/BMP9 signaling through SMAD1 in endothelial cells and modulates TGFB1 signaling through SMAD3. The sequence is that of Endoglin (Eng) from Mus musculus (Mouse).